A 352-amino-acid polypeptide reads, in one-letter code: DNA polymerase IV (352 aa).

A UmuC domain is found at 4–185 (IIHVDMDCFF…LPLSKIPGVG (182 aa)). Residues D8 and D103 each coordinate Mg(2+). E104 is an active-site residue.

Belongs to the DNA polymerase type-Y family. As to quaternary structure, monomer. Mg(2+) serves as cofactor.

It localises to the cytoplasm. The catalysed reaction is DNA(n) + a 2'-deoxyribonucleoside 5'-triphosphate = DNA(n+1) + diphosphate. Its function is as follows. Poorly processive, error-prone DNA polymerase involved in untargeted mutagenesis. Copies undamaged DNA at stalled replication forks, which arise in vivo from mismatched or misaligned primer ends. These misaligned primers can be extended by PolIV. Exhibits no 3'-5' exonuclease (proofreading) activity. May be involved in translesional synthesis, in conjunction with the beta clamp from PolIII. The polypeptide is DNA polymerase IV (Yersinia pseudotuberculosis serotype O:1b (strain IP 31758)).